A 290-amino-acid chain; its full sequence is Ribonuclease 3 (290 aa).

One can recognise an RNase III domain in the interval 20-145; that stretch reads YSCFYRILGF…FIGAIYLDRG (126 aa). Residue E62 coordinates Mg(2+). D66 is a catalytic residue. The Mg(2+) site is built by N131 and E134. The active site involves E134. Positions 173–242 constitute a DRBM domain; the sequence is NFKSKLIEWS…AQMTLKKIKG (70 aa). The segment at 254–290 is disordered; sequence KTQNNVPAEDTTPESETSLTAENQQIDEIISTEEISV. Residues 267–279 show a composition bias toward polar residues; sequence ESETSLTAENQQI.

It belongs to the ribonuclease III family. As to quaternary structure, homodimer. Mg(2+) is required as a cofactor.

The protein localises to the cytoplasm. The enzyme catalyses Endonucleolytic cleavage to 5'-phosphomonoester.. Digests double-stranded RNA. Involved in the processing of primary rRNA transcript to yield the immediate precursors to the large and small rRNAs (23S and 16S). Processes some mRNAs, and tRNAs when they are encoded in the rRNA operon. Processes pre-crRNA and tracrRNA of type II CRISPR loci if present in the organism. The sequence is that of Ribonuclease 3 from Bacteroides fragilis (strain ATCC 25285 / DSM 2151 / CCUG 4856 / JCM 11019 / LMG 10263 / NCTC 9343 / Onslow / VPI 2553 / EN-2).